Here is a 206-residue protein sequence, read N- to C-terminus: Dephospho-CoA kinase (206 aa).

A DPCK domain is found at 4 to 200 (IVALTGGIGS…AHYLQLASQF (197 aa)). 12–17 (GSGKST) serves as a coordination point for ATP.

Belongs to the CoaE family.

It localises to the cytoplasm. The catalysed reaction is 3'-dephospho-CoA + ATP = ADP + CoA + H(+). It functions in the pathway cofactor biosynthesis; coenzyme A biosynthesis; CoA from (R)-pantothenate: step 5/5. Functionally, catalyzes the phosphorylation of the 3'-hydroxyl group of dephosphocoenzyme A to form coenzyme A. This is Dephospho-CoA kinase from Shigella flexneri.